The following is a 508-amino-acid chain: MIHHLKRTKIIATCGPALTKKLWTLAMLDDPAYAAMKAEAYANIENIIKNGVTVIRLNFSHGNHEEQAVRIKIVRDVAKKLNLPVSIMLDTNGPEIRVFETAPEGLKILKDSEVVINTTTKEVAKNNQFSVSDASGTYNMVNDVKVGQKILVDDGKLSLVVKRIDTKNNQVICVAQNDHTIFTKKRLNLPNADYSIPFLSAKDLRDIDFGLTHQIDYIAASFVNTTENIKQLRDYLASKNAKHVKLIAKIESNHALNNIDGIIKASDGIMVARGDLGLEIPYYKVPYWQRYMIKACRFFNKRVITATQMLDSLEKNIQPTRAEVTDVYFAVDRGNDATMLSGETANGAFPLNAVYVMKMIDKQSETFFDYQYNLNYYMANSKARHSEFWKQVVLPLAQKTAPKRKLINSDFKYDFVVHATNNLNEIYALSNARLAAAVIILTNDPQVYTGHGVDYGIFPYLIDQKPQSLSKAEFKSLANVAIKHYQQHGEISQLKQCLGVFHNKIISL.

Arg-56 provides a ligand contact to substrate. K(+)-binding residues include Asn-58, Ser-60, Asp-90, and Thr-91. 58-61 lines the ATP pocket; the sequence is NFSH. The ATP site is built by Arg-97 and Lys-185. Glu-251 provides a ligand contact to Mg(2+). The substrate site is built by Gly-274, Asp-275, and Thr-307. A Mg(2+)-binding site is contributed by Asp-275.

This sequence belongs to the pyruvate kinase family. As to quaternary structure, homotetramer. The cofactor is Mg(2+). Requires K(+) as cofactor.

It catalyses the reaction pyruvate + ATP = phosphoenolpyruvate + ADP + H(+). It functions in the pathway carbohydrate degradation; glycolysis; pyruvate from D-glyceraldehyde 3-phosphate: step 5/5. Regulated by phosphoenolpyruvate substrate and is allosterically activated by ribose-5-phosphate, AMP and other nucleoside monophosphates but not by fructose-1,6-bisphosphate. This is Pyruvate kinase (pyk) from Mycoplasma pneumoniae (strain ATCC 29342 / M129 / Subtype 1) (Mycoplasmoides pneumoniae).